We begin with the raw amino-acid sequence, 501 residues long: Glycosyltransferase family 92 protein F13G3.3 (501 aa).

Residues 10–30 (LSVVLLFSFLFFVTAVLLQFI) form a helical membrane-spanning segment. Positions 151 to 439 (KPVVMCISPL…ISDCYKQSYY (289 aa)) constitute a GT92 domain.

The protein belongs to the glycosyltransferase 92 family.

It localises to the membrane. The chain is Glycosyltransferase family 92 protein F13G3.3 from Caenorhabditis elegans.